The chain runs to 501 residues: Splicing factor ESS-2 homolog (501 aa).

Low complexity-rich tracts occupy residues 1–18 and 105–115; these read MSATTRTPATPGTPGTPG and ISGTGRSTSRR. Disordered stretches follow at residues 1 to 20 and 105 to 163; these read MSATTRTPATPGTPGTPGSL and ISGT…GRDT. Residues 126 to 151 show a composition bias toward polar residues; it reads TPVSQAKCSNTPLPNSRATDTPFSTD. Basic and acidic residues predominate over residues 152–163; sequence GSEKSDAEGRDT. Residues serine 409 and serine 411 each carry the phosphoserine modification. The disordered stretch occupies residues 425–471; the sequence is RGTPRLRHTPSPMSGRKRKVTPGVVRSTNTPILGEPKPKQQAKISTP.

The protein belongs to the ESS2 family.

The protein localises to the nucleus. This is Splicing factor ESS-2 homolog (Es2) from Drosophila melanogaster (Fruit fly).